The following is a 61-amino-acid chain: Phospholipase A2 (61 aa).

Tyr-27, Gly-29, and Gly-31 together coordinate Ca(2+). Cys-28 and Cys-35 are joined by a disulfide. Residue His-38 is part of the active site. Asp-39 is a Ca(2+) binding site. Residues Cys-41 and Cys-59 are joined by a disulfide bond. Residue Asp-60 is part of the active site.

This sequence belongs to the phospholipase A2 family. Group II subfamily. D49 sub-subfamily. In terms of assembly, homodimer. The cofactor is Ca(2+). Expressed by the venom gland.

The protein resides in the secreted. It catalyses the reaction a 1,2-diacyl-sn-glycero-3-phosphocholine + H2O = a 1-acyl-sn-glycero-3-phosphocholine + a fatty acid + H(+). Functionally, snake venom phospholipase A2 (PLA2) that displays edema-inducing activities. PLA2 catalyzes the calcium-dependent hydrolysis of the 2-acyl groups in 3-sn-phosphoglycerides. The protein is Phospholipase A2 of Crotalus atrox (Western diamondback rattlesnake).